The chain runs to 379 residues: Probable pectin lyase A (379 aa).

An N-terminal signal peptide occupies residues 1–19 (MKFALLSGVAAGLLPVVSA). 2 disulfide bridges follow: Cys82/Cys101 and Cys91/Cys225. Residue Arg255 is part of the active site. Cys322 and Cys330 form a disulfide bridge.

This sequence belongs to the polysaccharide lyase 1 family.

The protein resides in the secreted. It carries out the reaction Eliminative cleavage of (1-&gt;4)-alpha-D-galacturonan methyl ester to give oligosaccharides with 4-deoxy-6-O-methyl-alpha-D-galact-4-enuronosyl groups at their non-reducing ends.. In terms of biological role, pectinolytic enzymes consist of four classes of enzymes: pectin lyase, polygalacturonase, pectin methylesterase and rhamnogalacturonase. Among pectinolytic enzymes, pectin lyase is the most important in depolymerization of pectin, since it cleaves internal glycosidic bonds of highly methylated pectins. In Aspergillus oryzae (strain ATCC 42149 / RIB 40) (Yellow koji mold), this protein is Probable pectin lyase A (pelA).